The following is a 141-amino-acid chain: Transmembrane protein 216 (141 aa).

Helical transmembrane passes span 15–35 (ILFF…LFIF), 49–69 (LVLD…RLFF), 82–102 (LGIS…YLLL), and 115–135 (SILL…LTAF).

Part of the tectonic-like complex (also named B9 complex). Interacts with TMEM107.

Its subcellular location is the membrane. It is found in the cytoplasm. The protein resides in the cytoskeleton. The protein localises to the cilium basal body. Part of the tectonic-like complex which is required for tissue-specific ciliogenesis and may regulate ciliary membrane composition. This is Transmembrane protein 216 (TMEM216) from Bos taurus (Bovine).